The chain runs to 286 residues: Polyamine aminopropyltransferase (286 aa).

One can recognise a PABS domain in the interval 5–238 (TMWHETLHDQ…GIMTFAWATD (234 aa)). Glutamine 33 contacts S-methyl-5'-thioadenosine. Spermidine contacts are provided by histidine 64 and aspartate 88. S-methyl-5'-thioadenosine is bound by residues glutamate 108 and 140–141 (DG). The active-site Proton acceptor is the aspartate 158. Residue 158-161 (DCTD) coordinates spermidine. Proline 165 serves as a coordination point for S-methyl-5'-thioadenosine.

It belongs to the spermidine/spermine synthase family. In terms of assembly, homodimer or homotetramer.

It is found in the cytoplasm. It catalyses the reaction S-adenosyl 3-(methylsulfanyl)propylamine + putrescine = S-methyl-5'-thioadenosine + spermidine + H(+). It functions in the pathway amine and polyamine biosynthesis; spermidine biosynthesis; spermidine from putrescine: step 1/1. Its function is as follows. Catalyzes the irreversible transfer of a propylamine group from the amino donor S-adenosylmethioninamine (decarboxy-AdoMet) to putrescine (1,4-diaminobutane) to yield spermidine. The polypeptide is Polyamine aminopropyltransferase (Salmonella paratyphi A (strain ATCC 9150 / SARB42)).